The sequence spans 492 residues: MTLWINGDWVTGQGALRVKRNPVSGEVLWQGNDADAAQVGQACRAARAAFPRWARLSFGDRQVRVERFAGLLESNKAELTAIIARETGKPRWEAATEVTAMINKIAISIKAYHVRTGEQRSEMPDGAASLRHRPHGVLAVFGPYNFPGHLPNGHIVPALLAGNTIIFKPSELTPWSGDAVMRLWQQAGLPPGVLNLVQGGRETGQALSALEDLDGLLFTGSANTGYQLHHQLSGQPEKILALEMGGNNPLIIDEVADIDAAVHLTIQSAFVTAGQRCTCARRLFLKSGTQGDAFLARLVAVSQRLTPGTWDDEPQPFIGGLISEQAAQQVVTAWQELEAMGGRTLLAPRLLQAGTSLLTPGIIEMTGVTGLPDEEVFGPLLRVWRYDNFDEAIRMANNTRFGLSCGLVSPEREKFDQLLLEARAGIVNWNKPLTGAASTAPFGGIGASGNHRPSAWYAADYCAWPMASLESDSLTLPATLNPGLDFSDEVVR.

Residue 220-225 (GSANTG) participates in NAD(+) binding. Active-site residues include Glu243 and Cys277.

Belongs to the aldehyde dehydrogenase family. AstD subfamily.

It catalyses the reaction N-succinyl-L-glutamate 5-semialdehyde + NAD(+) + H2O = N-succinyl-L-glutamate + NADH + 2 H(+). It participates in amino-acid degradation; L-arginine degradation via AST pathway; L-glutamate and succinate from L-arginine: step 4/5. Catalyzes the NAD-dependent reduction of succinylglutamate semialdehyde into succinylglutamate. In Escherichia coli O81 (strain ED1a), this protein is N-succinylglutamate 5-semialdehyde dehydrogenase.